Reading from the N-terminus, the 187-residue chain is MATTADFKSGMCLNLEGRYYYIVEFLHVKPGKGPAFVRTKLKSVTTGRVIEKTFNAGVKIDEVRIERRLYLFLYQDDMIYHFMQNETFEQVFVERNNIVGVDFLKEGDMVEIVVHADSETILFAEIPIHAVLTVIYTEPGIKGDTATNATKLATIETGASIRVPLFINKGDKIKVDTRNGSYVERVK.

The protein belongs to the elongation factor P family.

The protein localises to the cytoplasm. It functions in the pathway protein biosynthesis; polypeptide chain elongation. Involved in peptide bond synthesis. Stimulates efficient translation and peptide-bond synthesis on native or reconstituted 70S ribosomes in vitro. Probably functions indirectly by altering the affinity of the ribosome for aminoacyl-tRNA, thus increasing their reactivity as acceptors for peptidyl transferase. The sequence is that of Elongation factor P from Azobacteroides pseudotrichonymphae genomovar. CFP2.